A 306-amino-acid chain; its full sequence is Ornithine carbamoyltransferase 1, anabolic (306 aa).

Carbamoyl phosphate contacts are provided by residues 53-56 (STRT), Gln-80, Arg-104, and 131-134 (HPCQ). Residues Asn-162, Asp-219, and 223-224 (SM) contribute to the L-ornithine site. Residues 259–260 (CL) and Arg-287 contribute to the carbamoyl phosphate site.

This sequence belongs to the aspartate/ornithine carbamoyltransferase superfamily. OTCase family. Homotrimer.

The protein resides in the cytoplasm. The enzyme catalyses carbamoyl phosphate + L-ornithine = L-citrulline + phosphate + H(+). Its pathway is amino-acid biosynthesis; L-arginine biosynthesis; L-arginine from L-ornithine and carbamoyl phosphate: step 1/3. Reversibly inhibited by inhibited by phaseolotoxin and octicidine. In terms of biological role, reversibly catalyzes the transfer of the carbamoyl group from carbamoyl phosphate (CP) to the N(epsilon) atom of ornithine (ORN) to produce L-citrulline, which is a substrate for argininosuccinate synthetase, the enzyme involved in the final step in arginine biosynthesis. The chain is Ornithine carbamoyltransferase 1, anabolic from Pseudomonas savastanoi pv. phaseolicola (Pseudomonas syringae pv. phaseolicola).